The sequence spans 421 residues: Gamma-glutamyl phosphate reductase (421 aa).

Belongs to the gamma-glutamyl phosphate reductase family.

It is found in the cytoplasm. The enzyme catalyses L-glutamate 5-semialdehyde + phosphate + NADP(+) = L-glutamyl 5-phosphate + NADPH + H(+). It participates in amino-acid biosynthesis; L-proline biosynthesis; L-glutamate 5-semialdehyde from L-glutamate: step 2/2. In terms of biological role, catalyzes the NADPH-dependent reduction of L-glutamate 5-phosphate into L-glutamate 5-semialdehyde and phosphate. The product spontaneously undergoes cyclization to form 1-pyrroline-5-carboxylate. The protein is Gamma-glutamyl phosphate reductase of Acinetobacter baumannii (strain ACICU).